We begin with the raw amino-acid sequence, 333 residues long: MAHIPVLLKEMLLQLSPQNGGIYVDATFGAGGYSKAILESADCKVYAIDRDKTVIKFYEDLNIKYPSRVKLFIEKFSNIRSILDSNSLEYLVEPSAVSKLSSIISSGIQKKNIWISASSTGVTPSNTVDGVVFDIGVSSMQLDDGDRGFSFLHDGPLDMRMDNSSHTNASTFVNALREEEIANTIYNYGGERHSRRIARAIVNARKKKTIKTTFELANIVRSVVFRGKSKIDPATRTFQAIRIWVNDELGELEKGIKAASEILNKNGKLIVVTFHSLEDRIVKTFFKSLCEPRSIDCKVFSLLNKKMIKASAEEVNANPRSRSAKLRAIQRLS.

S-adenosyl-L-methionine contacts are provided by residues 31-33, D49, F76, D134, and Q141; that span reads GGY.

Belongs to the methyltransferase superfamily. RsmH family.

It localises to the cytoplasm. It carries out the reaction cytidine(1402) in 16S rRNA + S-adenosyl-L-methionine = N(4)-methylcytidine(1402) in 16S rRNA + S-adenosyl-L-homocysteine + H(+). Its function is as follows. Specifically methylates the N4 position of cytidine in position 1402 (C1402) of 16S rRNA. This is Ribosomal RNA small subunit methyltransferase H from Wolbachia sp. subsp. Brugia malayi (strain TRS).